The following is a 166-amino-acid chain: Ubiquitin-fold modifier-conjugating enzyme 1 (166 aa).

Cysteine 116 (glycyl thioester intermediate) is an active-site residue.

This sequence belongs to the ubiquitin-conjugating enzyme family. UFC1 subfamily.

In terms of biological role, E2-like enzyme which forms an intermediate with UFM1 via a thioester linkage. This chain is Ubiquitin-fold modifier-conjugating enzyme 1, found in Monosiga brevicollis (Choanoflagellate).